The following is a 139-amino-acid chain: Protein spalt-accessory (139 aa).

The signal sequence occupies residues 1–16 (MKLLIALLALVTAAIA). The segment covering 60–75 (GIGQGGVHPGQGGFAG) has biased composition (gly residues). The disordered stretch occupies residues 60–139 (GIGQGGVHPG…HHEHHGHHRH (80 aa)). Residues 109 to 121 (NPHEYPEHHGEHH) show a composition bias toward basic and acidic residues. Positions 122–139 (REHHEHHGHHEHHGHHRH) are enriched in basic residues.

Its subcellular location is the secreted. Its function is as follows. Likely to be involved in the establishment of the head. The polypeptide is Protein spalt-accessory (sala) (Drosophila simulans (Fruit fly)).